Here is a 339-residue protein sequence, read N- to C-terminus: Phosphate acyltransferase (339 aa).

Belongs to the PlsX family. In terms of assembly, homodimer. Probably interacts with PlsY.

The protein resides in the cytoplasm. The catalysed reaction is a fatty acyl-[ACP] + phosphate = an acyl phosphate + holo-[ACP]. The protein operates within lipid metabolism; phospholipid metabolism. Functionally, catalyzes the reversible formation of acyl-phosphate (acyl-PO(4)) from acyl-[acyl-carrier-protein] (acyl-ACP). This enzyme utilizes acyl-ACP as fatty acyl donor, but not acyl-CoA. The protein is Phosphate acyltransferase of Tolumonas auensis (strain DSM 9187 / NBRC 110442 / TA 4).